Reading from the N-terminus, the 115-residue chain is Ustilagic acid biosynthesis cluster protein orf3 (115 aa).

A signal peptide spans 1–38 (MTYSKIACSLGKRGIARAPNQASSFFLLLFLFAKFSQQ). The interval 42 to 62 (SPCLASSGVAKSRGPASTDRP) is disordered.

Its pathway is secondary metabolite biosynthesis. Part of the gene cluster that mediates the biosynthesis of the glycolipid biosurfactant ustilagic acid (UA). UA is a secreted cellobiose glycolipid that is toxic for many microorganisms and confers biocontrol activity to U.maydis. UA consists of 15,16-dihydroxypalmitic or 2,15,16-trihydroxypalmitic acid, which is O-glycosidically linked to cellobiose at its terminal hydroxyl group. In addition, the cellobiose moiety is acetylated and acylated with a short-chain hydroxy fatty acid. UA biosynthesis starts with omega-hydroxylation of palmitic acid catalyzed by the cytochrome P450 monooxygenase cyp1. Terminal hydroxylation of palmitic acid precedes subterminal hydroxylation catalyzed by the cytochrome P450 monooxygenase cyp2. Sequential glucosylation of the hydroxy fatty acid is probably catalyzed by the glycosyltransferase ugt1. The cellobiose lipid is further decorated by acetylation of the proximal glucose residue and by acylation with a short-chain beta-hydroxy fatty acid at the distal glucose residue. The acyltransferase uat1 may be a good candidate for catalyzing either acetylation or acylation of the cellobiose lipid. The fatty acid synthase fas2 may be involved in synthesis of the carbon backbone of the short-chain beta-hydroxy fatty acid esterified to the cellobiose disaccharide. The secreted UA consists of a mixture of both alpha-hydroxylated and non-hydroxylated glycolipids; therefore, alpha-hydroxylation of the long-chain fatty, catalyzed by the fatty acid hydroxylase ahd1, occurs late in UA biosynthesis and may be the last step before secretion. The sequence is that of Ustilagic acid biosynthesis cluster protein orf3 from Mycosarcoma maydis (Corn smut fungus).